Reading from the N-terminus, the 835-residue chain is Leucine--tRNA ligase (835 aa).

Residues 36–46 (PYPSGKIHVGH) carry the 'HIGH' region motif. Residues 602-606 (KMSKS) carry the 'KMSKS' region motif. Lys-605 lines the ATP pocket.

This sequence belongs to the class-I aminoacyl-tRNA synthetase family.

Its subcellular location is the cytoplasm. It catalyses the reaction tRNA(Leu) + L-leucine + ATP = L-leucyl-tRNA(Leu) + AMP + diphosphate. In Rickettsia massiliae (strain Mtu5), this protein is Leucine--tRNA ligase.